The sequence spans 31 residues: Cytochrome b6-f complex subunit 8 (31 aa).

A helical transmembrane segment spans residues 5-25 (IVSMAWAALMVVFTFSLSLVI).

It belongs to the PetN family. The 4 large subunits of the cytochrome b6-f complex are cytochrome b6, subunit IV (17 kDa polypeptide, PetD), cytochrome f and the Rieske protein, while the 4 small subunits are PetG, PetL, PetM and PetN. The complex functions as a dimer.

Its subcellular location is the plastid membrane. Component of the cytochrome b6-f complex, which mediates electron transfer between photosystem II (PSII) and photosystem I (PSI), cyclic electron flow around PSI, and state transitions. The chain is Cytochrome b6-f complex subunit 8 from Cuscuta gronovii (Common dodder).